A 249-amino-acid chain; its full sequence is Secreted flagellin C (249 aa).

In terms of assembly, interacts with FliS.

It localises to the secreted. Functionally, might play a role in virulence. In Campylobacter jejuni subsp. jejuni serotype O:6 (strain 81116 / NCTC 11828), this protein is Secreted flagellin C (flaC).